The following is a 367-amino-acid chain: tRNA-specific 2-thiouridylase MnmA (367 aa).

Residues glycine 13–serine 20 and methionine 39 each bind ATP. The segment at asparagine 99–aspartate 101 is interaction with target base in tRNA. The Nucleophile role is filled by cysteine 104. Cysteine 104 and cysteine 200 are oxidised to a cystine. Residue glycine 128 coordinates ATP. The interaction with tRNA stretch occupies residues lysine 150–glutamine 152. Cysteine 200 acts as the Cysteine persulfide intermediate in catalysis. The interval arginine 307 to tyrosine 308 is interaction with tRNA.

The protein belongs to the MnmA/TRMU family.

The protein localises to the cytoplasm. The enzyme catalyses S-sulfanyl-L-cysteinyl-[protein] + uridine(34) in tRNA + AH2 + ATP = 2-thiouridine(34) in tRNA + L-cysteinyl-[protein] + A + AMP + diphosphate + H(+). Its function is as follows. Catalyzes the 2-thiolation of uridine at the wobble position (U34) of tRNA, leading to the formation of s(2)U34. The sequence is that of tRNA-specific 2-thiouridylase MnmA from Neisseria meningitidis serogroup C (strain 053442).